The sequence spans 199 residues: Peptidyl-tRNA hydrolase (199 aa).

TRNA is bound at residue Tyr15. His20 (proton acceptor) is an active-site residue. Residues Phe66, Asn68, and Asn114 each coordinate tRNA.

Belongs to the PTH family. Monomer.

The protein resides in the cytoplasm. It carries out the reaction an N-acyl-L-alpha-aminoacyl-tRNA + H2O = an N-acyl-L-amino acid + a tRNA + H(+). Hydrolyzes ribosome-free peptidyl-tRNAs (with 1 or more amino acids incorporated), which drop off the ribosome during protein synthesis, or as a result of ribosome stalling. Its function is as follows. Catalyzes the release of premature peptidyl moieties from peptidyl-tRNA molecules trapped in stalled 50S ribosomal subunits, and thus maintains levels of free tRNAs and 50S ribosomes. This Cupriavidus pinatubonensis (strain JMP 134 / LMG 1197) (Cupriavidus necator (strain JMP 134)) protein is Peptidyl-tRNA hydrolase.